Reading from the N-terminus, the 268-residue chain is Embryonic abundant protein VF30.1 (268 aa).

Positions 1–25 (MEFAHLTVLSLFCLAFVGITATSSG) are cleaved as a signal peptide. Residues 68–259 (LFFEHDLHPG…GNKAAAWVPN (192 aa)) enclose the BURP domain. The N-linked (GlcNAc...) asparagine glycan is linked to Asn259.

In terms of tissue distribution, seed.

It localises to the secreted. This is Embryonic abundant protein VF30.1 from Vicia faba (Broad bean).